Consider the following 139-residue polypeptide: Nucleoside diphosphate kinase (139 aa).

Residues Lys-9, Phe-57, Arg-85, Thr-91, Arg-102, and Asn-112 each coordinate ATP. His-115 (pros-phosphohistidine intermediate) is an active-site residue.

This sequence belongs to the NDK family. Homotetramer. Mg(2+) serves as cofactor.

The protein resides in the cytoplasm. It carries out the reaction a 2'-deoxyribonucleoside 5'-diphosphate + ATP = a 2'-deoxyribonucleoside 5'-triphosphate + ADP. The enzyme catalyses a ribonucleoside 5'-diphosphate + ATP = a ribonucleoside 5'-triphosphate + ADP. Major role in the synthesis of nucleoside triphosphates other than ATP. The ATP gamma phosphate is transferred to the NDP beta phosphate via a ping-pong mechanism, using a phosphorylated active-site intermediate. The protein is Nucleoside diphosphate kinase of Exiguobacterium sp. (strain ATCC BAA-1283 / AT1b).